Reading from the N-terminus, the 353-residue chain is UPF0283 membrane protein CKO_01392 (353 aa).

3 helical membrane passes run 70–90 (MVMG…VQWT), 99–119 (WVAL…VGSV), and 213–233 (ESTL…FIAW).

The protein belongs to the UPF0283 family.

It localises to the cell inner membrane. The polypeptide is UPF0283 membrane protein CKO_01392 (Citrobacter koseri (strain ATCC BAA-895 / CDC 4225-83 / SGSC4696)).